The chain runs to 342 residues: Nucleoid-associated protein Shewana3_2426 (342 aa).

This sequence belongs to the YejK family.

It is found in the cytoplasm. The protein resides in the nucleoid. This chain is Nucleoid-associated protein Shewana3_2426, found in Shewanella sp. (strain ANA-3).